Consider the following 423-residue polypeptide: Transcription factor IIIB 50 kDa subunit (423 aa).

The TFIIB-type zinc finger occupies 1–34 (MSKNCPECGSSRVVEDDLYSQKQWVCEDCGSVVS). The Zn(2+) site is built by cysteine 5, cysteine 8, cysteine 26, and cysteine 29. Residues 171-245 (LESFCYDFKL…LARMKYSLMK (75 aa)) form repeat 2. Over residues 325–340 (QTSQYSESELSDSKSS) the composition is skewed to low complexity. The interval 325 to 358 (QTSQYSESELSDSKSSVQTQCKSPPDEEDEGCEL) is disordered. Cysteine 373 carries the post-translational modification Cysteine sulfenic acid (-SOH).

Belongs to the TFIIB family. As to quaternary structure, component of TFIIIB complexes. Interacts with TBP and forms a ternary complex with TBp and target DNA sequences. Post-translationally, in response to oxidative stress, a Cys-residue is reversibly oxidized to cysteine sulfenic acid. This impairs formation of a ternary complex with TBP and DNA and down-regulates expression of target genes in response to oxidative stress.

The protein resides in the nucleus. Functionally, general activator of RNA polymerase III transcription. Factor exclusively required for RNA polymerase III transcription of genes with promoter elements upstream of the initiation sites. Contributes to the regulation of gene expression; functions as activator in the absence of oxidative stress. Down-regulates expression of target genes in response to oxidative stress. Overexpression protects cells against apoptosis in response to oxidative stress. This Danio rerio (Zebrafish) protein is Transcription factor IIIB 50 kDa subunit (brf2).